A 251-amino-acid chain; its full sequence is Hydroxyacylglutathione hydrolase (251 aa).

Residues histidine 53, histidine 55, aspartate 57, histidine 58, histidine 110, aspartate 127, and histidine 165 each contribute to the Zn(2+) site.

Belongs to the metallo-beta-lactamase superfamily. Glyoxalase II family. In terms of assembly, monomer. Zn(2+) serves as cofactor.

The enzyme catalyses an S-(2-hydroxyacyl)glutathione + H2O = a 2-hydroxy carboxylate + glutathione + H(+). It participates in secondary metabolite metabolism; methylglyoxal degradation; (R)-lactate from methylglyoxal: step 2/2. In terms of biological role, thiolesterase that catalyzes the hydrolysis of S-D-lactoyl-glutathione to form glutathione and D-lactic acid. The polypeptide is Hydroxyacylglutathione hydrolase (Escherichia coli (strain SE11)).